The sequence spans 434 residues: MAVGIFILSLNPSYELVDWKRVGDTKLVALVRSALVRVKFNDGTSSDSNNQDTNQNALSFDTQESQKALNGSQSGSSDTSGSNSQDFASYILIFQAAPRATWVFERKIKLELPYVKNESGAGDSTTTNSGSLYTTLQDLLVEQPVTPYTPNAGLARVNGAAQDTVHFGSGQESSWNSQRSQKVLKNNPGPKAVTGFKLDKGRAYRKLNEAWPVYEPLDSTKDGKGKDESSWNSSEKTTAESDAPLVGSTGSQMAAVTDSQQSGDNNGLVSLAQRSTTVAVQKSDSSGSQGQGTTDNKFQKYLNTTQALHQMGVIVPSLETWAGENKYWNRYPCCWWCFSPSSDPAIVFHKWRSTECNHPVIPYFNRPTRLLKWPDRCDGFERGTEFVVLGRGWANHVRKGYLMSPHRVELGHRQAEGVCGESAWFQWNQRHRLA.

2 disordered regions span residues 168-193 (GSGQ…PKAV) and 215-267 (EPLD…DNNG). Residues 170–184 (GQESSWNSQRSQKVL) show a composition bias toward polar residues. Residues 218-229 (DSTKDGKGKDES) are compositionally biased toward basic and acidic residues. The segment covering 248 to 267 (STGSQMAAVTDSQQSGDNNG) has biased composition (polar residues).

This sequence belongs to the MgpC family.

The chain is Putative MgpC-like protein MPN_149 from Mycoplasma pneumoniae (strain ATCC 29342 / M129 / Subtype 1) (Mycoplasmoides pneumoniae).